Here is a 219-residue protein sequence, read N- to C-terminus: Agamous-like MADS-box protein AGL19 (219 aa).

The 61-residue stretch at 1 to 61 folds into the MADS-box domain; that stretch reads MVRGKTEMKR…SKLYEFSSSS (61 aa). Residues 77-96 are disordered; it reads GNNHKRNDNSQQARDETSGL. The K-box domain occupies 86 to 176; that stretch reads SQQARDETSG…KEKWLGMGTA (91 aa).

Interacts with SOC1 and AGL21. In terms of tissue distribution, mostly expressed in the outer layers of the root meristem (lateral root cap and epidermis) and in the central cylinder cells of mature roots. Also present in rosette leaves and seedlings and, to a lesser extent, in cauline leaves and flowers. Enriched in apices including the shoot apical meristem and developing leaf primordia.

It is found in the nucleus. In terms of biological role, probable transcription factor that promotes flowering, especially in response to vernalization by short periods of cold, in an FLC-inpedendent manner. The sequence is that of Agamous-like MADS-box protein AGL19 (AGL19) from Arabidopsis thaliana (Mouse-ear cress).